We begin with the raw amino-acid sequence, 396 residues long: NASP-related protein sim3 (396 aa).

The tract at residues 1–31 (MSSDTKTLENSKGNSATDADTKNPSSSDSRA) is disordered. 2 TPR repeats span residues 32–65 (IEQL…SESI) and 89–122 (IENS…GSFT). Positions 135 to 164 (NEENSSIAHPEKESEEKETNEASPASEEDE) are disordered. The span at 143–154 (HPEKESEEKETN) shows a compositional bias: basic and acidic residues. One copy of the TPR 3 repeat lies at 199-232 (ADIYDLLGELSLEIENFSQASQDLKTALEWKEKV). Residues 267 to 329 (CEHVEKAAEI…QKTLDLKHGA (63 aa)) are a coiled coil. The segment covering 284 to 301 (RENEVTDKKGKGKQKAEE) has biased composition (basic and acidic residues). Disordered stretches follow at residues 284–307 (RENE…LTSD) and 334–396 (EAVM…KKKD). Over residues 343-353 (SSLLSKDSSSL) the composition is skewed to low complexity.

This sequence belongs to the NASP family. Interacts with cnp1, hht1, hht2 and hht3; has a preference for CENP-A (cnp1) over histone H3 (hht1/2/3).

Its subcellular location is the nucleus. In terms of biological role, histone H3 and H3-like CENP-A-specific chaperone. Promotes delivery and incorporation of CENP-A in centromeric chromatin, probably by escorting nascent CENP-A to CENP-A chromatin assembly factors. Required for central core silencing and normal chromosome segregation. The protein is NASP-related protein sim3 (sim3) of Schizosaccharomyces pombe (strain 972 / ATCC 24843) (Fission yeast).